The chain runs to 153 residues: uncharacterized protein (153 aa).

2 consecutive transmembrane segments (helical) span residues 1–21 and 106–126; these read MAAT…LFFS and IVPI…TVYI.

It localises to the membrane. This is an uncharacterized protein from Saccharomyces cerevisiae (strain ATCC 204508 / S288c) (Baker's yeast).